The following is a 148-amino-acid chain: Aspartate carbamoyltransferase regulatory chain (148 aa).

Residues Cys106, Cys111, Cys134, and Cys137 each contribute to the Zn(2+) site.

It belongs to the PyrI family. Contains catalytic and regulatory chains. Zn(2+) is required as a cofactor.

Its function is as follows. Involved in allosteric regulation of aspartate carbamoyltransferase. The polypeptide is Aspartate carbamoyltransferase regulatory chain (Methanococcus maripaludis (strain DSM 14266 / JCM 13030 / NBRC 101832 / S2 / LL)).